The chain runs to 215 residues: Small ribosomal subunit protein uS2 (215 aa).

This sequence belongs to the universal ribosomal protein uS2 family.

This Caldivirga maquilingensis (strain ATCC 700844 / DSM 13496 / JCM 10307 / IC-167) protein is Small ribosomal subunit protein uS2.